A 28-amino-acid chain; its full sequence is Short cationic peptide-1c (28 aa).

Glutamate 28 is modified (glutamic acid 1-amide).

In terms of tissue distribution, expressed by the venom gland.

It is found in the secreted. In Cupiennius salei (American wandering spider), this protein is Short cationic peptide-1c.